Consider the following 193-residue polypeptide: Bcl-2-binding component 3 (193 aa).

2 disordered regions span residues 1–32 and 71–131; these read MARA…RLMP and ALGG…VEEE. Residue Ser-10 is modified to Phosphoserine. The BH3 signature appears at 137 to 151; the sequence is IGAQLRRMADDLNAQ.

It belongs to the Bcl-2 family. Interacts with MCL1 and BCL2A1. Interacts (via BH3 domain) with BCL2 and BCL2L1/BCL-XL. Interacts (via BH3 domain) with NOL3/ARC (via CARD domain); this interaction prevents BBC3 association with BCL2 and results in CASP8 activation.

The protein localises to the mitochondrion. In terms of biological role, essential mediator of p53/TP53-dependent and p53/TP53-independent apoptosis. Promotes partial unfolding of BCL2L1 and dissociation of BCL2L1 from p53/TP53, releasing the bound p53/TP53 to induce apoptosis. Regulates ER stress-induced neuronal apoptosis. The chain is Bcl-2-binding component 3 (Bbc3) from Rattus norvegicus (Rat).